The primary structure comprises 250 residues: Thiamine thiazole synthase (250 aa).

NAD(+) is bound by residues S36, 55–56, G63, V126, and 152–154; these read EE and HVD. Fe cation is bound by residues D154 and H169. M216 is an NAD(+) binding site. R226 lines the glycine pocket.

Belongs to the THI4 family. In terms of assembly, homooctamer; tetramer of dimers. The cofactor is Fe(2+).

It catalyses the reaction hydrogen sulfide + glycine + NAD(+) = ADP-5-ethyl-4-methylthiazole-2-carboxylate + nicotinamide + 3 H2O + H(+). Its pathway is cofactor biosynthesis; thiamine diphosphate biosynthesis. Its function is as follows. Involved in the biosynthesis of the thiazole moiety of thiamine. Catalyzes the conversion of NAD and glycine to adenosine diphosphate 5-(2-hydroxyethyl)-4-methylthiazole-2-carboxylate (ADT), an adenylated thiazole intermediate, using free sulfide as a source of sulfur. The chain is Thiamine thiazole synthase from Thermotoga maritima (strain ATCC 43589 / DSM 3109 / JCM 10099 / NBRC 100826 / MSB8).